The chain runs to 271 residues: Sedoheptulose 1,7-bisphosphatase (271 aa).

Arg12 is a binding site for substrate. His13 serves as the catalytic Tele-phosphohistidine intermediate. Residues 24-25 (YT), Arg69, 99-102 (EWEY), Arg181, and His244 each bind substrate. Glu99 (proton donor/acceptor) is an active-site residue.

This sequence belongs to the phosphoglycerate mutase family. SHB17 subfamily. In terms of assembly, homodimer.

The protein resides in the cytoplasm. Its subcellular location is the nucleus. It catalyses the reaction D-sedoheptulose 1,7-bisphosphate + H2O = D-sedoheptulose 7-phosphate + phosphate. Sedoheptulose 1,7-bisphosphatase involved in riboneogenesis. Dephosphorylates sedoheptulose 1,7-bisphosphate (SBP), which is converted via the non-oxidative pentose phosphate pathway to ribose-5-phosphate. Has a fructose 1,6-bisphosphatase activity in vitro, but this is probably not biologically relevant, since deletion does not affect fructose 1,6-biphosphate (FBP) levels. In Saccharomyces cerevisiae (strain ATCC 204508 / S288c) (Baker's yeast), this protein is Sedoheptulose 1,7-bisphosphatase (SHB17).